The primary structure comprises 69 residues: Microcin H47 immunity protein MchI (69 aa).

Residues 1–6 (MSYKKL) are Cytoplasmic-facing. Residues 7 to 29 (YQLTAIFSLPLTILLVSLSSLRI) traverse the membrane as a helical segment. Residues 30 to 38 (VGEGNSYVD) lie on the Periplasmic side of the membrane. Residues 39–61 (VFLSFIIFLGFIELIHGIRKILV) form a helical membrane-spanning segment. At 62–69 (WSGWKNGS) the chain is on the cytoplasmic side.

Its subcellular location is the cell membrane. Its function is as follows. Protects a microcin H47-producer cell against microcin H47. The sequence is that of Microcin H47 immunity protein MchI (mchI) from Escherichia coli.